A 467-amino-acid polypeptide reads, in one-letter code: Chromosomal replication initiator protein DnaA (467 aa).

Residues 1–74 (MSADVWSQGC…ESVLSDLAGK (74 aa)) form a domain I, interacts with DnaA modulators region. The tract at residues 74–130 (KPVRLDLQLAAREAPPRPSSDAPRSNGHPQAAGQWLGAPSSSNAGAYTQASAPTPTH) is domain II. The tract at residues 85-127 (REAPPRPSSDAPRSNGHPQAAGQWLGAPSSSNAGAYTQASAPT) is disordered. The span at 112–127 (PSSSNAGAYTQASAPT) shows a compositional bias: polar residues. A domain III, AAA+ region region spans residues 131–347 (RLNTALTFDT…GALRKVLAYA (217 aa)). Positions 175, 177, 178, and 179 each coordinate ATP. The tract at residues 348–467 (RFSQKDINIA…LHVLEQTLKG (120 aa)) is domain IV, binds dsDNA.

It belongs to the DnaA family. Oligomerizes as a right-handed, spiral filament on DNA at oriC.

It localises to the cytoplasm. Its function is as follows. Plays an essential role in the initiation and regulation of chromosomal replication. ATP-DnaA binds to the origin of replication (oriC) to initiate formation of the DNA replication initiation complex once per cell cycle. Binds the DnaA box (a 9 base pair repeat at the origin) and separates the double-stranded (ds)DNA. Forms a right-handed helical filament on oriC DNA; dsDNA binds to the exterior of the filament while single-stranded (ss)DNA is stabiized in the filament's interior. The ATP-DnaA-oriC complex binds and stabilizes one strand of the AT-rich DNA unwinding element (DUE), permitting loading of DNA polymerase. After initiation quickly degrades to an ADP-DnaA complex that is not apt for DNA replication. Binds acidic phospholipids. In Methylibium petroleiphilum (strain ATCC BAA-1232 / LMG 22953 / PM1), this protein is Chromosomal replication initiator protein DnaA.